Consider the following 245-residue polypeptide: Ribosomal RNA large subunit methyltransferase E (245 aa).

Residues 1–25 (MTKSPIGGNRSGRKLGQKVKKGKLK) are disordered. A compositionally biased stretch (basic residues) spans 11-25 (SGRKLGQKVKKGKLK). S-adenosyl-L-methionine-binding residues include glycine 81, tryptophan 83, aspartate 104, aspartate 120, and aspartate 144. Catalysis depends on lysine 184, which acts as the Proton acceptor.

It belongs to the class I-like SAM-binding methyltransferase superfamily. RNA methyltransferase RlmE family.

The protein resides in the cytoplasm. It carries out the reaction uridine(2552) in 23S rRNA + S-adenosyl-L-methionine = 2'-O-methyluridine(2552) in 23S rRNA + S-adenosyl-L-homocysteine + H(+). Its function is as follows. Specifically methylates the uridine in position 2552 of 23S rRNA at the 2'-O position of the ribose in the fully assembled 50S ribosomal subunit. This Sinorhizobium fredii (strain NBRC 101917 / NGR234) protein is Ribosomal RNA large subunit methyltransferase E.